Here is a 354-residue protein sequence, read N- to C-terminus: Zinc finger protein-like 1 homolog (354 aa).

Residues 1-41 (MGICKCKKRSEDFCFNHKKFICDSCVVADHSICYIKSYVSW) form a B box-type; degenerate zinc finger. Residues 52 to 103 (CGVCKGKFDVDDNDDSVRLLCYHLYHPECIDVYVAALPQNSSVESYPCPKCP) form an RING-type; atypical zinc finger. Disordered stretches follow at residues 139-167 (KQNS…NGTH) and 187-225 (GIHH…PYGL). Low complexity predominate over residues 196–205 (NNSNNNNIIN). The helical transmembrane segment at 287-307 (YLIMITVAIIVFLILISKMGS) threads the bilayer. The interval 326–354 (ININNDNNGGNGAINEETLNDQKIPNNGQ) is disordered.

The protein belongs to the ZFPL1 family.

Its subcellular location is the membrane. This chain is Zinc finger protein-like 1 homolog (zfpl1), found in Dictyostelium discoideum (Social amoeba).